Here is a 466-residue protein sequence, read N- to C-terminus: Hydroxyproline dehydrogenase (466 aa).

It belongs to the proline oxidase family. The cofactor is FAD.

It carries out the reaction trans-4-hydroxy-L-proline + a quinone = (3R,5S)-1-pyrroline-3-hydroxy-5-carboxylate + a quinol + H(+). It catalyses the reaction L-proline + a quinone = (S)-1-pyrroline-5-carboxylate + a quinol + H(+). The protein operates within amino-acid degradation; L-proline degradation into L-glutamate; L-glutamate from L-proline: step 1/2. Functionally, dehydrogenase that converts trans-4-L-hydroxyproline to delta-1-pyrroline-3-hydroxy-5-carboxylate (Hyp) using a quinone as the terminal electron acceptor. Can also use proline as a substrate but with a very much lower efficiency. Does not react with other diastereomers of Hyp: trans-4-D-hydroxyproline and cis-4-L-hydroxyproline. This Xenopus laevis (African clawed frog) protein is Hydroxyproline dehydrogenase (prodh2).